A 372-amino-acid chain; its full sequence is uncharacterized protein (372 aa).

The N-terminal stretch at Met-1–Ser-19 is a signal peptide. Asn-18 carries N-linked (GlcNAc...) asparagine glycosylation. The 141-residue stretch at Ser-20–Ile-160 folds into the MRH domain. Cys-22 and Cys-58 are disulfide-bonded. An N-linked (GlcNAc...) asparagine glycan is attached at Asn-59. An intrachain disulfide couples Cys-128 to Cys-158. Residues Asn-185–Ile-282 are a coiled coil. The tract at residues Lys-201–Asn-233 is disordered. Positions Asn-206 to Asn-230 are enriched in low complexity.

Its subcellular location is the secreted. This is an uncharacterized protein from Dictyostelium discoideum (Social amoeba).